A 253-amino-acid polypeptide reads, in one-letter code: Ubiquinone/menaquinone biosynthesis C-methyltransferase UbiE (253 aa).

Residues threonine 76, aspartate 97, and 125–126 (NA) contribute to the S-adenosyl-L-methionine site.

This sequence belongs to the class I-like SAM-binding methyltransferase superfamily. MenG/UbiE family.

It carries out the reaction a 2-demethylmenaquinol + S-adenosyl-L-methionine = a menaquinol + S-adenosyl-L-homocysteine + H(+). It catalyses the reaction a 2-methoxy-6-(all-trans-polyprenyl)benzene-1,4-diol + S-adenosyl-L-methionine = a 5-methoxy-2-methyl-3-(all-trans-polyprenyl)benzene-1,4-diol + S-adenosyl-L-homocysteine + H(+). The protein operates within quinol/quinone metabolism; menaquinone biosynthesis; menaquinol from 1,4-dihydroxy-2-naphthoate: step 2/2. It functions in the pathway cofactor biosynthesis; ubiquinone biosynthesis. Methyltransferase required for the conversion of demethylmenaquinol (DMKH2) to menaquinol (MKH2) and the conversion of 2-polyprenyl-6-methoxy-1,4-benzoquinol (DDMQH2) to 2-polyprenyl-3-methyl-6-methoxy-1,4-benzoquinol (DMQH2). The sequence is that of Ubiquinone/menaquinone biosynthesis C-methyltransferase UbiE from Rhodopseudomonas palustris (strain HaA2).